Reading from the N-terminus, the 4481-residue chain is Dynein axonemal heavy chain 17 (4481 aa).

A stem region spans residues 1–1792; that stretch reads MPDLRIDYLE…FANICDAQIK (1792 aa). A Kelch 1 repeat occupies 521-569; it reads LLYMCGGLLERPLILVEVVPRYSVMLEMFNTELDNAKLMYDAQMAASAD. Residues 759-826 are a coiled coil; sequence ENVMEYIQEM…GRVANLNKRY (68 aa). TPR repeat units lie at residues 1533-1566 and 1688-1722; these read VVEA…YLET and IWWT…QLNA. 4 AAA regions span residues 1793–2014, 2074–2295, 2401–2649, and 2747–2996; these read YSYE…VLVV, KIIK…IGFK, ELDP…IFQG, and SYNE…ERRY. Residues 1831–1838 and 2112–2119 each bind ATP; these read GPAGTGKT and GNAGSGKS. Residues 2229–2275 form a Kelch 2 repeat; sequence ISHLRTATPATVSRAGILYINPADLGWNPVVSSWIERRKVQSEKANL. Residues 2439–2446 and 2785–2792 contribute to the ATP site; these read GNAGTGKS and GVGGSGKQ. The stretch at 2782-2834 is one Kelch 3 repeat; that stretch reads LLVGVGGSGKQSLSRLAAYISALDVFQITLKKGYAIPDLKMDLATQYIKSAVK. Coiled coils occupy residues 3011 to 3071 and 3241 to 3293; these read YQNL…IQVV and DVAP…EKIK. Residues 3011-3297 are stalk; sequence YQNLLAKKRM…TAEKIKCQQE (287 aa). 2 AAA regions span residues 3389–3616 and 3826–4059; these read LTDD…EIEE and VKNF…VLYN. One copy of the TPR 3 repeat lies at 4138-4173; the sequence is PESPYLYGLHPNAEIGFLTVTSEKLFRTVLEMQPKE. 2 Kelch repeats span residues 4272–4321 and 4339–4385; these read NLGL…DLLQ and VWLA…DMTA.

The protein belongs to the dynein heavy chain family. Consists of at least two heavy chains and a number of intermediate and light chains.

The protein resides in the cytoplasm. It is found in the cytoskeleton. The protein localises to the flagellum axoneme. In terms of biological role, force generating protein component of the outer dynein arms (ODAs) in the sperm flagellum. Produces force towards the minus ends of microtubules. Dynein has ATPase activity; the force-producing power stroke is thought to occur on release of ADP. Plays a major role in sperm motility, implicated in sperm flagellar assembly and beating. The polypeptide is Dynein axonemal heavy chain 17 (Mus musculus (Mouse)).